We begin with the raw amino-acid sequence, 1026 residues long: Tyrosine-protein phosphatase 1 (1026 aa).

The FERM domain occupies 29-315 (IRCTVTFLDS…EQHTFFRLKT (287 aa)). Disordered stretches follow at residues 376–396 (SIDSSRYTNTTTTDSPELPSS), 430–456 (PLTTPLSPRRTRDYATDSESSAPSLRQ), 489–515 (GIHASTASVRPVSSGSTPNGASRKSAN), and 584–616 (SFASAGIGGSPPRSKRSPQSNKSSSPVGEDQVV). Polar residues predominate over residues 446-456 (DSESSAPSLRQ). The segment covering 600 to 609 (SPQSNKSSSP) has biased composition (low complexity). The PDZ domain maps to 617–689 (TIKMRPDRHG…DHVVQFIRSA (73 aa)). Positions 753–1011 (VVDHFEMLYR…TFVCESILRA (259 aa)) constitute a Tyrosine-protein phosphatase domain. Substrate is bound by residues aspartate 920, 952–958 (CSAGIGR), and glutamine 996. Cysteine 952 functions as the Phosphocysteine intermediate in the catalytic mechanism.

The protein belongs to the protein-tyrosine phosphatase family. Non-receptor class subfamily.

Its subcellular location is the cytoplasm. It is found in the cytoskeleton. It catalyses the reaction O-phospho-L-tyrosyl-[protein] + H2O = L-tyrosyl-[protein] + phosphate. The polypeptide is Tyrosine-protein phosphatase 1 (ptp-1) (Caenorhabditis elegans).